The following is a 323-amino-acid chain: tRNA dimethylallyltransferase (323 aa).

27–34 contacts ATP; that stretch reads GPTGSGKT. 29 to 34 contacts substrate; it reads TGSGKT. Interaction with substrate tRNA regions lie at residues 52–55 and 176–180; these read DSRQ and QRIVR.

It belongs to the IPP transferase family. Monomer. Mg(2+) is required as a cofactor.

It catalyses the reaction adenosine(37) in tRNA + dimethylallyl diphosphate = N(6)-dimethylallyladenosine(37) in tRNA + diphosphate. Catalyzes the transfer of a dimethylallyl group onto the adenine at position 37 in tRNAs that read codons beginning with uridine, leading to the formation of N6-(dimethylallyl)adenosine (i(6)A). The sequence is that of tRNA dimethylallyltransferase from Desulfovibrio desulfuricans (strain ATCC 27774 / DSM 6949 / MB).